Reading from the N-terminus, the 860-residue chain is DNA mismatch repair protein MutS (860 aa).

608-615 serves as a coordination point for ATP; the sequence is GPNMAGKS.

Belongs to the DNA mismatch repair MutS family.

Functionally, this protein is involved in the repair of mismatches in DNA. It is possible that it carries out the mismatch recognition step. This protein has a weak ATPase activity. The chain is DNA mismatch repair protein MutS from Borrelia turicatae (strain 91E135).